A 241-amino-acid polypeptide reads, in one-letter code: MADS-box transcription factor 57 (241 aa).

The MADS-box domain occupies 1 to 61; the sequence is MGRGKIVIRR…GRLYEFSSTN (61 aa). In terms of domain architecture, K-box spans 85–178; that stretch reads IKIWQREAAS…LNVMSQQKLE (94 aa). The disordered stretch occupies residues 216 to 241; that stretch reads LELSQSQQREGECSKTAAPELGLHLP.

Interacts with TB1. Expressed in seedling roots and shoots. Highly expressed in young leaves.

The protein localises to the nucleus. Functionally, transcriptional factor that targets the CArG motif 5'-C(A/T)TTAAAAAG-3' in the promoter of D14. Directly suppresses D14 expression to control the outgrowth of axillary buds. This is MADS-box transcription factor 57 from Oryza sativa subsp. japonica (Rice).